The chain runs to 203 residues: UPF0637 protein Sca_0732 (203 aa).

Belongs to the UPF0637 family.

The polypeptide is UPF0637 protein Sca_0732 (Staphylococcus carnosus (strain TM300)).